A 212-amino-acid chain; its full sequence is Ribosomal RNA small subunit methyltransferase G (212 aa).

Residues Gly73, Phe78, 96–98 (ESS), 124–125 (VE), and Arg141 each bind S-adenosyl-L-methionine.

The protein belongs to the methyltransferase superfamily. RNA methyltransferase RsmG family.

Its subcellular location is the cytoplasm. Specifically methylates the N7 position of a guanine in 16S rRNA. The polypeptide is Ribosomal RNA small subunit methyltransferase G (Aster yellows witches'-broom phytoplasma (strain AYWB)).